The chain runs to 237 residues: Proteasome subunit beta 2 (237 aa).

The span at 1-14 (MNNWSQGSTPQGSD) shows a compositional bias: polar residues. A propeptide spans 1–42 (MNNWSQGSTPQGSDPSPYAPELGSLPDGSQSDDHGDTVNKTG) (removed in mature form; by autocatalysis). The disordered stretch occupies residues 1–45 (MNNWSQGSTPQGSDPSPYAPELGSLPDGSQSDDHGDTVNKTGTTT). Thr-43 acts as the Nucleophile in catalysis.

This sequence belongs to the peptidase T1B family. As to quaternary structure, the 20S proteasome core is composed of 14 alpha and 14 beta subunits that assemble into four stacked heptameric rings, resulting in a barrel-shaped structure. The two inner rings, each composed of seven catalytic beta subunits, are sandwiched by two outer rings, each composed of seven alpha subunits. The catalytic chamber with the active sites is on the inside of the barrel. Has a gated structure, the ends of the cylinder being occluded by the N-termini of the alpha-subunits. Is capped at one or both ends by the proteasome regulatory ATPase, PAN.

It localises to the cytoplasm. The enzyme catalyses Cleavage of peptide bonds with very broad specificity.. With respect to regulation, the formation of the proteasomal ATPase PAN-20S proteasome complex, via the docking of the C-termini of PAN into the intersubunit pockets in the alpha-rings, triggers opening of the gate for substrate entry. Interconversion between the open-gate and close-gate conformations leads to a dynamic regulation of the 20S proteasome proteolysis activity. In terms of biological role, component of the proteasome core, a large protease complex with broad specificity involved in protein degradation. The chain is Proteasome subunit beta 2 from Haloterrigena turkmenica (strain ATCC 51198 / DSM 5511 / JCM 9101 / NCIMB 13204 / VKM B-1734 / 4k) (Halococcus turkmenicus).